The sequence spans 519 residues: Chromobox protein homolog 2 (519 aa).

Residues phenylalanine 12–arginine 70 enclose the Chromo domain. The segment covering lysine 60–asparagine 69 has biased composition (basic and acidic residues). The tract at residues lysine 60–proline 180 is disordered. Basic residues predominate over residues arginine 70 to threonine 84. A DNA-binding region (a.T hook) is located at residues arginine 75–serine 87. Residues lysine 103–serine 119 show a composition bias toward low complexity. The span at leucine 129–histidine 141 shows a compositional bias: basic and acidic residues. Glycyl lysine isopeptide (Lys-Gly) (interchain with G-Cter in SUMO2) cross-links involve residues lysine 147 and lysine 154. The short motif at lysine 164 to proline 169 is the Nuclear localization signal element. At arginine 248 the chain carries Asymmetric dimethylarginine; alternate. Arginine 248 carries the post-translational modification Omega-N-methylarginine; alternate. Disordered regions lie at residues glutamine 295–threonine 336 and alanine 367–proline 464. The residue at position 303 (serine 303) is a Phosphoserine. Polar residues-rich tracts occupy residues glutamine 321 to threonine 336 and threonine 384 to asparagine 395. A compositionally biased stretch (low complexity) spans serine 453–proline 464.

As to quaternary structure, component of a PRC1-like complex. The composition of the PRC1 complex may differ between the PRC1 complex in pluripotent embryonic stem cells containing RNF2, CBX7 and PCGF2, and the PRC1 complex in differentiating cells containing RNF2, CBX2, CBX4 and BMI1. Interacts with RING1/RNF2. Interacts (via chromodomain) with histone H3K9Me3 and H3K27me3. May interact with H3C15 and H3C1. As to expression, expressed in embryoid bodies.

It localises to the nucleus speckle. The protein localises to the chromosome. In terms of biological role, component of a Polycomb group (PcG) multiprotein PRC1-like complex, a complex class required to maintain the transcriptionally repressive state of many genes, including Hox genes, throughout development. PcG PRC1 complex acts via chromatin remodeling and modification of histones; it mediates monoubiquitination of histone H2A 'Lys-119', rendering chromatin heritably changed in its expressibility. Binds to histone H3 trimethylated at 'Lys-9' (H3K9me3) or at 'Lys-27' (H3K27me3). Plays a role in the lineage differentiation of the germ layers in embryonic development. Involved in sexual development, acting as activator of NR5A1 expression. In Mus musculus (Mouse), this protein is Chromobox protein homolog 2 (Cbx2).